Here is a 271-residue protein sequence, read N- to C-terminus: Mannosyl-3-phosphoglycerate phosphatase (271 aa).

Residue aspartate 13 is the Nucleophile of the active site. Residues aspartate 13, aspartate 15, and aspartate 214 each contribute to the Mg(2+) site.

It belongs to the HAD-like hydrolase superfamily. MPGP family. Requires Mg(2+) as cofactor.

It localises to the cytoplasm. The catalysed reaction is 2-O-(alpha-D-mannosyl)-3-phosphoglycerate + H2O = (2R)-2-O-(alpha-D-mannosyl)-glycerate + phosphate. This Shigella sonnei (strain Ss046) protein is Mannosyl-3-phosphoglycerate phosphatase (yedP).